The chain runs to 83 residues: uncharacterized protein (83 aa).

Belongs to the chlamydial CPn_0711/CT_665/TC_0036 family.

This is an uncharacterized protein from Chlamydia trachomatis serovar D (strain ATCC VR-885 / DSM 19411 / UW-3/Cx).